Here is a 388-residue protein sequence, read N- to C-terminus: Na(+)/H(+) antiporter NhaA (388 aa).

Residues 1-11 (MKHLHRFFSSD) are Cytoplasmic-facing. Residues 12 to 31 (ASGGIILIIAAILAMMMANS) form a helical membrane-spanning segment. Over 32–58 (GATSGWYHDFLETPVQLRVGSLEINKN) the chain is Periplasmic. The chain crosses the membrane as a helical span at residues 59–80 (MLLWINDALMAVFFLLVGLEVK). The Cytoplasmic portion of the chain corresponds to 81–96 (RELMQGSLASLRQAAF). The helical transmembrane segment at 97–116 (PVIAAIGGMIVPALLYLAFN) threads the bilayer. Topologically, residues 117–122 (YADPIT) are periplasmic. A helical membrane pass occupies residues 123-130 (REGWAIPA). At 131-154 (ATDIAFALGVLALLGSRVPLALKI) the chain is on the cytoplasmic side. The chain crosses the membrane as a helical span at residues 155 to 176 (FLMALAIIDDLGAIIIIALFYT). Topologically, residues 177 to 180 (NDLS) are periplasmic. The chain crosses the membrane as a helical span at residues 181-200 (MASLGVAAVAIAVLAVLNLC). Over 201-204 (GVRR) the chain is Cytoplasmic. A helical transmembrane segment spans residues 205-222 (TGVYILVGVVLWTAVLKS). Glycine 223 is a topological domain (periplasmic). Residues 224 to 236 (VHATLAGVIVGFF) form a helical membrane-spanning segment. Residues 237 to 253 (IPLKEKHGRSTAKRLEH) are Cytoplasmic-facing. A helical membrane pass occupies residues 254 to 272 (VLHPWVAYLILPLFAFANA). The Periplasmic portion of the chain corresponds to 273–286 (GVSLQGVTLDGLTS). The helical transmembrane segment at 287–310 (ILPLGIIAGLLIGKPLGISLFCWL) threads the bilayer. Residues 311 to 339 (ALRLKLAHLPEGTTYQQIMAVGILCGIGF) lie on the Cytoplasmic side of the membrane. A helical transmembrane segment spans residues 340–350 (TMSIFIASLAF). Residues 351–357 (GSVDPEL) are Periplasmic-facing. The helical transmembrane segment at 358-380 (INWAKLGILVGSISSAVIGYSWL) threads the bilayer. Over 381 to 388 (RVRLRPSV) the chain is Cytoplasmic.

This sequence belongs to the NhaA Na(+)/H(+) (TC 2.A.33) antiporter family.

It is found in the cell inner membrane. The enzyme catalyses Na(+)(in) + 2 H(+)(out) = Na(+)(out) + 2 H(+)(in). In terms of biological role, na(+)/H(+) antiporter that extrudes sodium in exchange for external protons. This is Na(+)/H(+) antiporter NhaA from Shigella dysenteriae serotype 1 (strain Sd197).